Reading from the N-terminus, the 268-residue chain is MTPLNIAVAGSTGRMGRAIMETIAEADDLRLSAALEQPGNPYLSQDAGSLTGTPPGVAISSDYVSALAGSDILVDFTRPAGTLSHLATCRKLGVRMVIGTTGFSPEEKDIIRNAAQDIAIVLAPNMSVGVNLLFRLLEVAAKALPEGYDVEIIEAHHRHKVDAPSGTALRMGEVIAQAQSRDLEKVAIYGREGNTGERRADTIGFSTIRGGDIVGDHTALFAGIGERLEITHKASSRKTFAAGALHAARFLMTRKSGLFDMQDVLGLR.

NAD(+) contacts are provided by residues 10 to 15, Glu-36, 99 to 101, and 123 to 126; these read GSTGRM, GTT, and APNM. Catalysis depends on His-156, which acts as the Proton donor/acceptor. His-157 provides a ligand contact to (S)-2,3,4,5-tetrahydrodipicolinate. The active-site Proton donor is Lys-160. 166–167 is a binding site for (S)-2,3,4,5-tetrahydrodipicolinate; the sequence is GT.

Belongs to the DapB family.

The protein resides in the cytoplasm. It carries out the reaction (S)-2,3,4,5-tetrahydrodipicolinate + NAD(+) + H2O = (2S,4S)-4-hydroxy-2,3,4,5-tetrahydrodipicolinate + NADH + H(+). It catalyses the reaction (S)-2,3,4,5-tetrahydrodipicolinate + NADP(+) + H2O = (2S,4S)-4-hydroxy-2,3,4,5-tetrahydrodipicolinate + NADPH + H(+). It functions in the pathway amino-acid biosynthesis; L-lysine biosynthesis via DAP pathway; (S)-tetrahydrodipicolinate from L-aspartate: step 4/4. Functionally, catalyzes the conversion of 4-hydroxy-tetrahydrodipicolinate (HTPA) to tetrahydrodipicolinate. The polypeptide is 4-hydroxy-tetrahydrodipicolinate reductase (Nitrosomonas europaea (strain ATCC 19718 / CIP 103999 / KCTC 2705 / NBRC 14298)).